The primary structure comprises 167 residues: Histone H2A.Z-specific chaperone CHZ1 (167 aa).

Disordered stretches follow at residues 1 to 116 (MSDE…IITT) and 131 to 167 (AEELDKERGVVAEEDEEEEEEEEKENEDDDFKEQVQN). Composition is skewed to basic and acidic residues over residues 16–44 (KPQEEQDTEKESLTNSEESKKRAVEPSTD) and 60–75 (ELEKEEAKEKNAKTEN). The span at 76–110 (NEEGDDDEDDEDDDYEQGKLEDEEEEEDELLEIDE) shows a compositional bias: acidic residues. Basic and acidic residues predominate over residues 131 to 141 (AEELDKERGVV). The span at 142–161 (AEEDEEEEEEEEKENEDDDF) shows a compositional bias: acidic residues.

Belongs to the CHZ1 family. Forms a heterotrimer with H2A.Z-H2B, stabilizing the association of the histone dimer. Also, with a lower affinity, forms a heterotrimer with H2A-H2B.

It localises to the nucleus. Its function is as follows. Forms a chaperone-bound H2A.Z-H2B complex that acts as a source for SWR1 complex-dependent H2A to H2A.Z histone replacement in chromatin. The sequence is that of Histone H2A.Z-specific chaperone CHZ1 (CHZ1) from Candida albicans (strain SC5314 / ATCC MYA-2876) (Yeast).